The chain runs to 308 residues: Phosphate transport system permease protein PstA 1 (308 aa).

Helical transmembrane passes span 36 to 56, 96 to 116, 132 to 152, 155 to 175, 204 to 224, and 276 to 296; these read FFFTSFVVALIPLVWLLWVVI, AGVAAVLAVPLGLMTAVYLVE, VLAGVPSIVAALFVFSLWIAT, FQQSAFAVALALVLLMLPVVV, IVRIVAPIAMPGIVSGILLSI, and WGAALTLIIVVATINLAAAMI. One can recognise an ABC transmembrane type-1 domain in the interval 89 to 297; sequence LYGTLVQAGV…TINLAAAMIR (209 aa).

This sequence belongs to the binding-protein-dependent transport system permease family. CysTW subfamily. In terms of assembly, the complex is composed of two ATP-binding proteins (PstB), two transmembrane proteins (PstC and PstA) and a solute-binding protein (PstS).

The protein resides in the cell membrane. Functionally, part of the binding-protein-dependent transport system for phosphate; probably responsible for the translocation of the substrate across the membrane. This chain is Phosphate transport system permease protein PstA 1 (pstA1), found in Mycobacterium tuberculosis (strain ATCC 25618 / H37Rv).